The chain runs to 331 residues: Ferredoxin--NADP reductase 2 (331 aa).

Residues glutamate 37, glutamine 45, tyrosine 50, valine 90, phenylalanine 124, aspartate 286, and threonine 327 each contribute to the FAD site.

This sequence belongs to the ferredoxin--NADP reductase type 2 family. In terms of assembly, homodimer. The cofactor is FAD.

It carries out the reaction 2 reduced [2Fe-2S]-[ferredoxin] + NADP(+) + H(+) = 2 oxidized [2Fe-2S]-[ferredoxin] + NADPH. This Listeria monocytogenes serotype 4b (strain F2365) protein is Ferredoxin--NADP reductase 2.